We begin with the raw amino-acid sequence, 465 residues long: MVRVRFAPSPTGHLHIGGARTALFNWLFARHHNGKFILRIEDTDRSRSTEEYIESIIEAMKWLGLDWDEGPFRQTDRMEVYKAYAYKLLEEGKAYRCYCTPEELEERRQQAMKEGKPPRYDRRCREIKETLNKPFAIRFKMPLEGETVVDDLVKGKVTFKNSEIEDLVILRSDGTPTYNFCVVVDDFEMGITHVIRGEDHLNNTPKQIHIYHALGMNPPEFAHIPMILGTDRARLSKRHGATSVLSYRDEGYLSDALVNFLARLGWSYGDKEIFTREELIKYFNLEQVGKANAVFNAEKLLWLNSEYIKLTPEEKLFELVKPFLIKEGYLKEGETLDKDWACRAIKSLKERCRTLKELAHAMRYYLLDYVEIEPKAKEKYINAETVPVLREVTEKLAALEEFTQERIEKIFMDIVNEKGLKLGQVAQPVRVVMTGSTVSPGIYEVLEIAGKEKTLKRLRRVIDAS.

Residues 8–18 (PSPTGHLHIGG) carry the 'HIGH' region motif. Zn(2+) contacts are provided by Cys97, Cys99, Cys124, and Glu126. Residues 234 to 238 (RLSKR) carry the 'KMSKS' region motif. An ATP-binding site is contributed by Lys237.

Belongs to the class-I aminoacyl-tRNA synthetase family. Glutamate--tRNA ligase type 1 subfamily. Monomer. It depends on Zn(2+) as a cofactor.

It is found in the cytoplasm. The catalysed reaction is tRNA(Glu) + L-glutamate + ATP = L-glutamyl-tRNA(Glu) + AMP + diphosphate. Functionally, catalyzes the attachment of glutamate to tRNA(Glu) in a two-step reaction: glutamate is first activated by ATP to form Glu-AMP and then transferred to the acceptor end of tRNA(Glu). This is Glutamate--tRNA ligase from Thermodesulfovibrio yellowstonii (strain ATCC 51303 / DSM 11347 / YP87).